A 299-amino-acid chain; its full sequence is Methionyl-tRNA formyltransferase (299 aa).

Residue 109–112 (SLLP) participates in (6S)-5,6,7,8-tetrahydrofolate binding.

It belongs to the Fmt family.

It catalyses the reaction L-methionyl-tRNA(fMet) + (6R)-10-formyltetrahydrofolate = N-formyl-L-methionyl-tRNA(fMet) + (6S)-5,6,7,8-tetrahydrofolate + H(+). Functionally, attaches a formyl group to the free amino group of methionyl-tRNA(fMet). The formyl group appears to play a dual role in the initiator identity of N-formylmethionyl-tRNA by promoting its recognition by IF2 and preventing the misappropriation of this tRNA by the elongation apparatus. The protein is Methionyl-tRNA formyltransferase of Dinoroseobacter shibae (strain DSM 16493 / NCIMB 14021 / DFL 12).